Consider the following 236-residue polypeptide: Sugar fermentation stimulation protein homolog (236 aa).

The protein belongs to the SfsA family.

The sequence is that of Sugar fermentation stimulation protein homolog from Methylobacterium nodulans (strain LMG 21967 / CNCM I-2342 / ORS 2060).